Here is a 20-residue protein sequence, read N- to C-terminus: Basic phospholipase A2 cannitoxin alpha chain (20 aa).

Heterotrimer of alpha, beta, and gamma chains; non-covalently linked. Ca(2+) is required as a cofactor. Expressed by the venom gland.

The protein localises to the secreted. The enzyme catalyses a 1,2-diacyl-sn-glycero-3-phosphocholine + H2O = a 1-acyl-sn-glycero-3-phosphocholine + a fatty acid + H(+). Its function is as follows. Heterotrimer: Snake venom phospholipase A2 (PLA2) heterotrimer that acts as a potent presynaptic neurotoxin by blocking synaptic transmission and synaptic vesicle recycling. Enzymatic activity is essential for the neurotoxic effects. May act by binding in a calcium-dependent fashion to neurotonal pentraxin-1 (NPTX1) and neurotonal pentraxin-2 (NPTX2), but not to neuronal pentraxin receptor (NPTXR). Also binds to taipoxin-associated calcium binding protein 49 (RCN2), a protein localized in the lumen of endoplasmic reticulum. In terms of biological role, monomer (alpha chain): Snake venom phospholipase A2 (PLA2) that possesses a low level of presynaptic activity and the same high enzymatic activity than the heterotrimer. PLA2 catalyzes the calcium-dependent hydrolysis of the 2-acyl groups in 3-sn-phosphoglycerides. This chain is Basic phospholipase A2 cannitoxin alpha chain, found in Oxyuranus scutellatus canni (Papuan taipan).